The primary structure comprises 90 residues: Translation initiation factor IF-1 2 (90 aa).

Positions 1-72 (MAKEELLELD…TKGRINFRHK (72 aa)) constitute an S1-like domain.

The protein belongs to the IF-1 family. Component of the 30S ribosomal translation pre-initiation complex which assembles on the 30S ribosome in the order IF-2 and IF-3, IF-1 and N-formylmethionyl-tRNA(fMet); mRNA recruitment can occur at any time during PIC assembly.

Its subcellular location is the cytoplasm. Functionally, one of the essential components for the initiation of protein synthesis. Stabilizes the binding of IF-2 and IF-3 on the 30S subunit to which N-formylmethionyl-tRNA(fMet) subsequently binds. Helps modulate mRNA selection, yielding the 30S pre-initiation complex (PIC). Upon addition of the 50S ribosomal subunit IF-1, IF-2 and IF-3 are released leaving the mature 70S translation initiation complex. The polypeptide is Translation initiation factor IF-1 2 (Paraburkholderia xenovorans (strain LB400)).